Reading from the N-terminus, the 631-residue chain is Polyadenylate-binding protein, cytoplasmic and nuclear (631 aa).

Residues M1–A56 are disordered. 4 consecutive RRM domains span residues A58–R136, G146–S223, T239–K316, and V342–R419. Positions G518–P545 are disordered. Residues P545 to K626 form the PABC domain.

The protein belongs to the polyadenylate-binding protein type-1 family.

Its subcellular location is the cytoplasm. The protein localises to the nucleus. Functionally, binds the poly(A) tail of mRNA. Appears to be an important mediator of the multiple roles of the poly(A) tail in mRNA biogenesis, stability and translation. In the nucleus, involved in both mRNA cleavage and polyadenylation. Is also required for efficient mRNA export to the cytoplasm. Acts in concert with a poly(A)-specific nuclease (PAN) to affect poly(A) tail shortening, which may occur concomitantly with either nucleocytoplasmic mRNA transport or translational initiation. In the cytoplasm, stimulates translation initiation and regulates mRNA decay through translation termination-coupled poly(A) shortening, probably mediated by PAN. The protein is Polyadenylate-binding protein, cytoplasmic and nuclear (PAB1) of Meyerozyma guilliermondii (strain ATCC 6260 / CBS 566 / DSM 6381 / JCM 1539 / NBRC 10279 / NRRL Y-324) (Yeast).